Consider the following 96-residue polypeptide: Small ribosomal subunit protein bS6 (96 aa).

The protein belongs to the bacterial ribosomal protein bS6 family.

Binds together with bS18 to 16S ribosomal RNA. The chain is Small ribosomal subunit protein bS6 (rpsF) from Mycobacterium leprae (strain TN).